We begin with the raw amino-acid sequence, 613 residues long: Proton myo-inositol cotransporter hmit-1.2 (613 aa).

The Cytoplasmic segment spans residues 1–21 (MVAVEFKVSESGRPRPEKNPK). Residues 22-42 (LGFFVYLLGSAAIIGGFLFGY) form a helical membrane-spanning segment. Topologically, residues 43–69 (DTSVVSAAMLYVPEAPGLKPMGTVWKE) are extracellular. A helical membrane pass occupies residues 70–90 (VIVSITPGMAAVGAWFSGAGS). Residues 91–96 (DRYGRK) are Cytoplasmic-facing. The helical transmembrane segment at 97-117 (PIIIGSTLIFVCGAVICAVAW) threads the bilayer. Over 118 to 119 (TK) the chain is Extracellular. A helical transmembrane segment spans residues 120–140 (IVMLIGRIFLGVGIGFASMVV). Topologically, residues 141–157 (PVYLGEASPTHVRGTLV) are cytoplasmic. The helical transmembrane segment at 158-178 (SAFAMMISFGQVVANIMGGVF) threads the bilayer. Topologically, residues 179-189 (SYWEPYTIGWR) are extracellular. The chain crosses the membrane as a helical span at residues 190 to 210 (LMFAFAGIPALIQFVCFIFLP). Residues 211-279 (ETPRWLYENG…RILKTPHVLK (69 aa)) lie on the Cytoplasmic side of the membrane. The helical transmembrane segment at 280–300 (ACFIGSMLQAFQQLAGINTIL) threads the bilayer. Residues 301-317 (YYTADIIRSAGIENYHT) are Extracellular-facing. A helical transmembrane segment spans residues 318–338 (IIWISVILSICNLIGPFAPMF). Over 339–347 (FIEKLGRRK) the chain is Cytoplasmic. The chain crosses the membrane as a helical span at residues 348-368 (LFLFSCAGVVVSLVLIGVSFL). Topologically, residues 369-472 (LVGNDSAPNF…QKHHCTTSYT (104 aa)) are extracellular. Residues Asn-372, Asn-451, and Asn-456 are each glycosylated (N-linked (GlcNAc...) asparagine). The chain crosses the membrane as a helical span at residues 473–493 (ILPIVMMGVYLLTFSCGFTSL). The Cytoplasmic segment spans residues 494–515 (PWVLNSEFYPMWARSTCVSIST). The helical transmembrane segment at 516-536 (LSNWVFNLIIALTYLSLTHAI) threads the bilayer. The Extracellular portion of the chain corresponds to 537 to 539 (TKY). Residues 540 to 560 (GAFWLYAIFTIIAFIFIYFLV) form a helical membrane-spanning segment. Topologically, residues 561-613 (PETTGYSIDEVEMLFMNKRQRNIAMQARQAKLDAASDKDKNSSTSLSTETITM) are cytoplasmic. The interval 594–613 (AASDKDKNSSTSLSTETITM) is disordered. Over residues 602-613 (SSTSLSTETITM) the composition is skewed to polar residues.

This sequence belongs to the major facilitator superfamily. Sugar transporter (TC 2.A.1.1) family. In terms of tissue distribution, expressed in the excretory canal cell and in pairs of amphid and sheath glia.

The protein localises to the cell membrane. Its subcellular location is the perikaryon. It catalyses the reaction myo-inositol(out) + H(+)(out) = myo-inositol(in) + H(+)(in). In terms of biological role, h(+)-myo-inositol cotransporter. Probably by promoting the transport of myo-inositol regulates intracellular osmosis in response to hyperosmotic stress. This Caenorhabditis elegans protein is Proton myo-inositol cotransporter hmit-1.2.